The chain runs to 373 residues: mRNA export factor rae-1 (373 aa).

M1 is modified (N-acetylmethionine). WD repeat units follow at residues 40-82 (APED…TFEG), 87-126 (NIPAPILDIAWIEDSSKIFIACADKEARLWDLASNQVAVV), 128-169 (THDG…NQTQ), and 276-315 (QEIYAVNDICFHPQHGTLVTIGSDGRYSMWDKDARTKLKT).

It belongs to the WD repeat rae1 family. In terms of assembly, the nuclear pore complex (NPC) constitutes the exclusive means of nucleocytoplasmic transport. NPCs allow the passive diffusion of ions and small molecules and the active, nuclear transport receptor-mediated bidirectional transport of macromolecules such as proteins, RNAs, ribonucleoparticles (RNPs), and ribosomal subunits across the nuclear envelope. Interacts with rpm-1. In terms of tissue distribution, expressed along the ventral and dorsal nerve cords.

The protein localises to the nucleus. It localises to the nuclear pore complex. Its subcellular location is the cell projection. It is found in the axon. The protein resides in the synapse. Functionally, functions as a component of the nuclear pore complex (NPC). NPC components, collectively referred to as nucleoporins (NUPs), can play the role of both NPC structural components and of docking or interaction partners for transiently associated nuclear transport factors. It is specifically important for nuclear mRNA export. Has a role in neuronal development, where it acts downstream of rpm-1 to control axon termination and synapse formation in anterior lateral microtubule (ALM) and posterior lateral microtubule (PLM) mechanosensory neurons. This chain is mRNA export factor rae-1, found in Caenorhabditis elegans.